We begin with the raw amino-acid sequence, 341 residues long: Ferredoxin--NADP reductase (341 aa).

Positions 36, 44, 49, 89, 123, 289, and 329 each coordinate FAD.

It belongs to the ferredoxin--NADP reductase type 2 family. In terms of assembly, homodimer. FAD serves as cofactor.

It catalyses the reaction 2 reduced [2Fe-2S]-[ferredoxin] + NADP(+) + H(+) = 2 oxidized [2Fe-2S]-[ferredoxin] + NADPH. The polypeptide is Ferredoxin--NADP reductase (Ligilactobacillus salivarius (strain UCC118) (Lactobacillus salivarius)).